The chain runs to 332 residues: Methionine import ATP-binding protein MetN (332 aa).

Positions 2 to 241 (IELKGLTKVF…PGSRLRELFY (240 aa)) constitute an ABC transporter domain. Position 38-45 (38-45 (GQSGAGKS)) interacts with ATP.

It belongs to the ABC transporter superfamily. Methionine importer (TC 3.A.1.24) family. In terms of assembly, the complex is composed of two ATP-binding proteins (MetN), two transmembrane proteins (MetI) and a solute-binding protein (MetQ).

The protein resides in the cell membrane. It carries out the reaction L-methionine(out) + ATP + H2O = L-methionine(in) + ADP + phosphate + H(+). It catalyses the reaction D-methionine(out) + ATP + H2O = D-methionine(in) + ADP + phosphate + H(+). In terms of biological role, part of the ABC transporter complex MetNIQ involved in methionine import. Responsible for energy coupling to the transport system. This Symbiobacterium thermophilum (strain DSM 24528 / JCM 14929 / IAM 14863 / T) protein is Methionine import ATP-binding protein MetN.